Here is a 266-residue protein sequence, read N- to C-terminus: Gasdermin bGSDM (266 aa).

The S-palmitoyl cysteine moiety is linked to residue C4. The next 4 beta stranded transmembrane spans lie at 69–85 (INGQ…GINI), 97–114 (AGIE…FEFS), 163–180 (EFTV…QLDV), and 189–205 (GKLK…TVTY). Positions 238–266 (AMALDAAGGVMPSDSALLDEGGLLDLEGF) are C-terminal region.

Belongs to the bacterial gasdermin family. Monomer in solution. As to quaternary structure, homooligomer; forms homooligomeric ring-shaped pores when inserted in membranes with 48-54 subunits per ring. Post-translationally, palmitoylation helps stabilize the inactive state; may self palmitoylate. Palmitoylation plays a significant role in pore formation.

Its subcellular location is the cytoplasm. It localises to the cell inner membrane. The full-length protein before cleavage is inactive: intramolecular interactions between the N-terminal domain and the C-terminal region as well as the lipid modification, mediate autoinhibition. The pyroptosis-like-inducing activity is carried by the released N-terminal domain (Gasdermin bGSDM, N-terminus). Functionally, precursor of a pore-forming protein involved in defense against bacteriophages. Expression of bGSDM and the neighboring protease gene (Ga0334635_1659) is toxic in E.coli. Cleavage of this precursor by its dedicated protease releases the active moiety (gasdermin bGSDM, N-terminus) which inserts into membranes, forming pores and triggering cell death. In terms of biological role, pore-forming protein that causes membrane permeabilization, probably via a pyroptosis-like activity. Makes ring-like pores with an interior pore diameter of 200-300 Angstroms, when integrated in liposomes. The sequence is that of Gasdermin bGSDM from Vitiosangium sp. (strain GDMCC 1.1324).